Here is a 251-residue protein sequence, read N- to C-terminus: Exotoxin type A (251 aa).

An N-terminal signal peptide occupies residues 1-30; it reads MENNKKVLKKMVFFVLVTFLGLTISQEVFA. C117 and C128 are joined by a disulfide.

Belongs to the staphylococcal/streptococcal toxin family.

Functionally, causative agent of the symptoms associated with scarlet fever, have been associated with streptococcal toxic shock-like disease and may play a role in the early events of rheumatic fever. This Streptococcus pyogenes serotype M18 (strain MGAS8232) protein is Exotoxin type A (speA).